The sequence spans 83 residues: Late seed maturation protein P8B6 (83 aa).

Composition is skewed to basic and acidic residues over residues 1-18 (MASQ…KKGE) and 37-51 (AEGR…KEQL). The interval 1–83 (MASQQEKKQL…DAEDEPSTRT (83 aa)) is disordered. Residues 73-83 (EDAEDEPSTRT) show a composition bias toward acidic residues.

The protein belongs to the small hydrophilic plant seed protein family.

The protein localises to the cytoplasm. Functionally, this protein may play a role in equipping the seed for survival, maintaining a minimal level of hydration in the dry organism and preventing the denaturation of cytoplasmic components, or may play a role during imbibition by controlling water uptake. The polypeptide is Late seed maturation protein P8B6 (Raphanus sativus (Radish)).